The primary structure comprises 24 residues: ASGPCFPNPCQNDGECHVIDDSHR.

Its subcellular location is the membrane. The protein resides in the secreted. It localises to the cytoplasmic vesicle. It is found in the secretory vesicle. The protein localises to the acrosome membrane. Functionally, specific ligand for the alpha-v/beta-3 and alpha-v/beta-5 receptors. Also binds to phosphatidylserine-enriched cell surfaces in a receptor-independent manner. Zona pellucida-binding protein which may play a role in gamete interaction. Contributes to phagocytic removal of apoptotic cells in many tissues. Plays an important role in the maintenance of intestinal epithelial homeostasis and the promotion of mucosal healing. Promotes VEGF-dependent neovascularization. The protein is Lactadherin of Equus asinus (Donkey).